The following is a 319-amino-acid chain: Sulfate adenylyltransferase subunit 2 (319 aa).

2 disordered regions span residues 1–22 (MNPG…TRRP) and 296–319 (RGAT…EGYF).

Belongs to the PAPS reductase family. CysD subfamily.

The enzyme catalyses sulfate + ATP + H(+) = adenosine 5'-phosphosulfate + diphosphate. Its pathway is antibiotic biosynthesis; mitomycin C biosynthesis. Functionally, with CysN forms the ATP sulfurylase (ATPS) that catalyzes the adenylation of sulfate producing adenosine 5'-phosphosulfate (APS) and diphosphate, the first enzymatic step in sulfur assimilation pathway. APS synthesis involves the formation of a high-energy phosphoric-sulfuric acid anhydride bond driven by GTP hydrolysis by CysN coupled to ATP hydrolysis by CysD. The sequence is that of Sulfate adenylyltransferase subunit 2 (mmcV) from Streptomyces lavendulae.